The following is a 275-amino-acid chain: Aldo-keto reductase MSMEG_2408/MSMEI_2347 (275 aa).

Catalysis depends on Tyr49, which acts as the Proton donor. NADPH is bound by residues Leu189, Ile227, Lys229, Ser230, Val231, Arg235, Ser238, and Asn239. Lys262 is covalently cross-linked (Isoglutamyl lysine isopeptide (Lys-Gln) (interchain with Q-Cter in protein Pup)).

Belongs to the aldo/keto reductase family.

The sequence is that of Aldo-keto reductase MSMEG_2408/MSMEI_2347 from Mycolicibacterium smegmatis (strain ATCC 700084 / mc(2)155) (Mycobacterium smegmatis).